Reading from the N-terminus, the 163-residue chain is Peptide methionine sulfoxide reductase MsrA 1 (163 aa).

Cys21 is an active-site residue.

It belongs to the MsrA Met sulfoxide reductase family.

The catalysed reaction is L-methionyl-[protein] + [thioredoxin]-disulfide + H2O = L-methionyl-(S)-S-oxide-[protein] + [thioredoxin]-dithiol. It carries out the reaction [thioredoxin]-disulfide + L-methionine + H2O = L-methionine (S)-S-oxide + [thioredoxin]-dithiol. Functionally, has an important function as a repair enzyme for proteins that have been inactivated by oxidation. Catalyzes the reversible oxidation-reduction of methionine sulfoxide in proteins to methionine. In Nostoc sp. (strain PCC 7120 / SAG 25.82 / UTEX 2576), this protein is Peptide methionine sulfoxide reductase MsrA 1 (msrA1).